The chain runs to 1259 residues: Protein transport protein sec31 (1259 aa).

WD repeat units lie at residues Arg5 to Asp47, Asp66 to Asp109, Lys118 to Arg158, Ala164 to Thr204, Met208 to Arg251, Gly255 to Glu295, and Val298 to Ala338. One copy of the WD 8; interaction with sec13 repeat lies at Thr382 to Thr407. Disordered stretches follow at residues Pro822–Ser845 and Ala868–Pro1154. 3 stretches are compositionally biased toward low complexity: residues Ala834–Ser845, Pro924–Ala939, and Ala950–Pro968. The segment covering Gly977–Thr1003 has biased composition (pro residues). Over residues Ser1004–Thr1014 the composition is skewed to low complexity. Residues Gly1045–Arg1061 are compositionally biased toward pro residues. The segment covering Tyr1062–Ala1079 has biased composition (low complexity). Pro residues predominate over residues Ser1105–Ala1123. Residues Pro1129–Pro1138 are compositionally biased toward low complexity.

Belongs to the WD repeat SEC31 family. As to quaternary structure, the COPII coat is composed of at least 5 proteins: the sec23/24 complex, the sec13/31 complex, and the protein sar1. sec13 and sec31 make a 2:2 tetramer that forms the edge element of the COPII outer coat. The tetramer self-assembles in multiple copies to form the complete polyhedral cage. Interacts (via WD 8) with sec13.

The protein resides in the cytoplasmic vesicle. Its subcellular location is the COPII-coated vesicle membrane. The protein localises to the endoplasmic reticulum membrane. Its function is as follows. Component of the coat protein complex II (COPII) which promotes the formation of transport vesicles from the endoplasmic reticulum (ER). The coat has two main functions, the physical deformation of the endoplasmic reticulum membrane into vesicles and the selection of cargo molecules. This Aspergillus niger (strain ATCC MYA-4892 / CBS 513.88 / FGSC A1513) protein is Protein transport protein sec31 (sec31).